Reading from the N-terminus, the 63-residue chain is uncharacterized protein (63 aa).

The first 21 residues, 1-21 (MYLSLLLILLAWTLWLGNSLA), serve as a signal peptide directing secretion.

This is an uncharacterized protein from Haemophilus influenzae (strain ATCC 51907 / DSM 11121 / KW20 / Rd).